The primary structure comprises 114 residues: uncharacterized protein (114 aa).

The chain crosses the membrane as a helical span at residues 7 to 27; the sequence is YIFSFWFFFLVEYVVTFRLFL. Residues 90–114 form a disordered region; it reads KNSPEKKKFKRGLPISSKYTDGKKR.

The protein resides in the membrane. This is an uncharacterized protein from Saccharomyces cerevisiae (strain ATCC 204508 / S288c) (Baker's yeast).